The primary structure comprises 330 residues: 2-phospho-L-lactate transferase (330 aa).

D49 lines the 7,8-didemethyl-8-hydroxy-5-deazariboflavin pocket.

Belongs to the CofD family. Homodimer. The cofactor is Mg(2+).

It carries out the reaction (2S)-lactyl-2-diphospho-5'-guanosine + 7,8-didemethyl-8-hydroxy-5-deazariboflavin = oxidized coenzyme F420-0 + GMP + H(+). It participates in cofactor biosynthesis; coenzyme F420 biosynthesis. Functionally, catalyzes the transfer of the 2-phospholactate moiety from (2S)-lactyl-2-diphospho-5'-guanosine to 7,8-didemethyl-8-hydroxy-5-deazariboflavin (FO) with the formation of oxidized coenzyme F420-0 and GMP. In Haloarcula marismortui (strain ATCC 43049 / DSM 3752 / JCM 8966 / VKM B-1809) (Halobacterium marismortui), this protein is 2-phospho-L-lactate transferase.